The following is a 172-amino-acid chain: Small ribosomal subunit protein uS13 (172 aa).

The segment at 131 to 172 (GQRTRTTGRTGVTVGVRRSKAAQAAQQQQKAQASSGGEKKQG) is disordered. The segment covering 134 to 163 (TRTTGRTGVTVGVRRSKAAQAAQQQQKAQA) has biased composition (low complexity).

It belongs to the universal ribosomal protein uS13 family. In terms of assembly, part of the 30S ribosomal subunit. Forms a loose heterodimer with protein S19. Forms two bridges to the 50S subunit in the 70S ribosome.

Functionally, located at the top of the head of the 30S subunit, it contacts several helices of the 16S rRNA. In the 70S ribosome it contacts the 23S rRNA (bridge B1a) and protein L5 of the 50S subunit (bridge B1b), connecting the 2 subunits; these bridges are implicated in subunit movement. This chain is Small ribosomal subunit protein uS13, found in Sulfurisphaera tokodaii (strain DSM 16993 / JCM 10545 / NBRC 100140 / 7) (Sulfolobus tokodaii).